The following is a 204-amino-acid chain: Somatotropin (204 aa).

The signal sequence occupies residues 1–17 (MDRVILLLSVVSLGVSS). A Pyrrolidone carboxylic acid modification is found at Gln18. Zn(2+) is bound at residue His36. A disulfide bond links Cys69 and Cys177. Residue Glu186 participates in Zn(2+) binding. Cysteines 194 and 202 form a disulfide.

Belongs to the somatotropin/prolactin family.

The protein localises to the secreted. In terms of biological role, growth hormone plays an important role in growth control and is involved in the regulation of several anabolic processes. Implicated as an osmoregulatory substance important for seawater adaptation. The polypeptide is Somatotropin (gh) (Sebastes schlegelii (Korean rockfish)).